Here is a 508-residue protein sequence, read N- to C-terminus: UTP--glucose-1-phosphate uridylyltransferase (508 aa).

The residue at position 13 (serine 13) is a Phosphoserine. UTP is bound by residues 113–116, lysine 127, glutamine 190, and glycine 222; that span reads LNGG. 115–116 is a binding site for substrate; it reads GG. Lysine 127 contributes to the Mg(2+) binding site. Substrate is bound by residues histidine 223 and 251-253; that span reads NID. Residues aspartate 253 and lysine 396 each coordinate UTP. Aspartate 253 is a binding site for Mg(2+). The active site involves lysine 396. The residue at position 426 (threonine 426) is a Phosphothreonine. At serine 434 the chain carries Phosphoserine. Lysine 438 carries the post-translational modification N6-acetyllysine. Serine 448 and serine 461 each carry phosphoserine. The tract at residues 457 to 508 is oligomerization; the sequence is HLTVSGDVTFGKNVSLKGTVIIIANHGDRIDIPPGAVLENKIVSGNLRILDH. The critical for end-to-end subunit interaction stretch occupies residues 502–503; the sequence is NL.

This sequence belongs to the UDPGP type 1 family. As to quaternary structure, homooctamer.

The protein resides in the cytoplasm. The catalysed reaction is alpha-D-glucose 1-phosphate + UTP + H(+) = UDP-alpha-D-glucose + diphosphate. Its pathway is glycan biosynthesis; glycogen biosynthesis. In terms of biological role, UTP--glucose-1-phosphate uridylyltransferase catalyzing the conversion of glucose-1-phosphate into UDP-glucose, a crucial precursor for the production of glycogen. The chain is UTP--glucose-1-phosphate uridylyltransferase (Ugp2) from Mus musculus (Mouse).